The sequence spans 345 residues: GTPase Obg (345 aa).

Residues 1–159 (MHFLDQAKIF…MWVWLRLKLL (159 aa)) enclose the Obg domain. The disordered stretch occupies residues 121-142 (GDGGRGNASYKTSTNRAPRQHG). In terms of domain architecture, OBG-type G spans 160–327 (ADCGLVGLPN…VLDKIIEILG (168 aa)). Residues 166-173 (GLPNAGKS), 191-195 (FTTIR), 212-215 (DIPG), 279-282 (NKID), and 308-310 (SGA) each bind GTP. Mg(2+)-binding residues include serine 173 and threonine 193.

The protein belongs to the TRAFAC class OBG-HflX-like GTPase superfamily. OBG GTPase family. In terms of assembly, monomer. It depends on Mg(2+) as a cofactor.

The protein localises to the cytoplasm. Functionally, an essential GTPase which binds GTP, GDP and possibly (p)ppGpp with moderate affinity, with high nucleotide exchange rates and a fairly low GTP hydrolysis rate. Plays a role in control of the cell cycle, stress response, ribosome biogenesis and in those bacteria that undergo differentiation, in morphogenesis control. In Rhizorhabdus wittichii (strain DSM 6014 / CCUG 31198 / JCM 15750 / NBRC 105917 / EY 4224 / RW1) (Sphingomonas wittichii), this protein is GTPase Obg.